The primary structure comprises 80 residues: Metallothionein-like protein type 2, MT2-28 (80 aa).

This sequence belongs to the metallothionein superfamily. Type 15 family.

Functionally, metallothioneins have a high content of cysteine residues that bind various heavy metals. This Brassica juncea (Indian mustard) protein is Metallothionein-like protein type 2, MT2-28.